Reading from the N-terminus, the 201-residue chain is Pyridoxal 5'-phosphate synthase subunit PdxT (201 aa).

49–51 (GES) is a binding site for L-glutamine. Catalysis depends on Cys-81, which acts as the Nucleophile. Residues Arg-110 and 139–140 (IR) each bind L-glutamine. Catalysis depends on charge relay system residues His-175 and Glu-177.

The protein belongs to the glutaminase PdxT/SNO family. In terms of assembly, in the presence of PdxS, forms a dodecamer of heterodimers. Only shows activity in the heterodimer.

It carries out the reaction aldehydo-D-ribose 5-phosphate + D-glyceraldehyde 3-phosphate + L-glutamine = pyridoxal 5'-phosphate + L-glutamate + phosphate + 3 H2O + H(+). The enzyme catalyses L-glutamine + H2O = L-glutamate + NH4(+). It functions in the pathway cofactor biosynthesis; pyridoxal 5'-phosphate biosynthesis. In terms of biological role, catalyzes the hydrolysis of glutamine to glutamate and ammonia as part of the biosynthesis of pyridoxal 5'-phosphate. The resulting ammonia molecule is channeled to the active site of PdxS. The protein is Pyridoxal 5'-phosphate synthase subunit PdxT of Streptomyces avermitilis (strain ATCC 31267 / DSM 46492 / JCM 5070 / NBRC 14893 / NCIMB 12804 / NRRL 8165 / MA-4680).